The primary structure comprises 201 residues: Dephospho-CoA kinase (201 aa).

Residues 4 to 201 form the DPCK domain; sequence IIGITGGIAS…LEGGRQDDRD (198 aa). 12 to 17 is a binding site for ATP; sequence ASGKST.

Belongs to the CoaE family.

The protein localises to the cytoplasm. The enzyme catalyses 3'-dephospho-CoA + ATP = ADP + CoA + H(+). It participates in cofactor biosynthesis; coenzyme A biosynthesis; CoA from (R)-pantothenate: step 5/5. Its function is as follows. Catalyzes the phosphorylation of the 3'-hydroxyl group of dephosphocoenzyme A to form coenzyme A. The polypeptide is Dephospho-CoA kinase (Streptococcus pneumoniae (strain ATCC BAA-255 / R6)).